We begin with the raw amino-acid sequence, 655 residues long: MEVAMVSAESSGCNSHMPYGYAAQARARERERLAHSRAAAAAAVAAATAAVEGTGGSGGGPHHHHQTRGAYSSHDPQGSRGSREEEATRTEKKKKLHHRQSSFPHCSDLMPSGSEEKILRELSEEEEDEEEEEEEEEEGRFYYSEEDHGDGCSYTDLLPQDDGGGGGYSSVRYSDCCERVVINVSGLRFETQMKTLAQFPETLLGDPEKRTQYFDPLRNEYFFDRNRPSFDAILYYYQSGGRLKRPVNVPFDIFTEEVKFYQLGEEALLKFREDEGFVREEEDRALPENEFKKQIWLLFEYPESSSPARGIAIVSVLVILISIVIFCLETLPEFRDDRDLIMALSAGGHSRLLNDTSAPHLENSGHTIFNDPFFIVETVCIVWFSFEFVVRCFACPSQALFFKNIMNIIDIVSILPYFITLGTDLAQQQGGGNGQQQQAMSFAILRIIRLVRVFRIFKLSRHSKGLQILGHTLRASMRELGLLIFFLFIGVILFSSAVYFAEADEPTTHFQSIPDAFWWAVVTMTTVGYGDMKPITVGGKIVGSLCAIAGVLTIALPVPVIVSNFNYFYHRETENEEQTQLTQNAVSCPYLPSNLLKKFRSSTSSSLGDKSEYLEMEEGVKESLCGKEEKCQGKGDDSETDKNNCSNAKAVETDV.

Residues 1–306 (MEVAMVSAES…LLFEYPESSS (306 aa)) are Cytoplasmic-facing. Residues 24–153 (QARARERERL…SEEDHGDGCS (130 aa)) form a disordered region. Over residues 36-50 (SRAAAAAAVAAATAA) the composition is skewed to low complexity. Residues 81 to 90 (GSREEEATRT) show a composition bias toward basic and acidic residues. Basic residues predominate over residues 91-100 (EKKKKLHHRQ). The residue at position 123 (Ser123) is a Phosphoserine. The segment covering 123-138 (SEEEEDEEEEEEEEEE) has biased composition (acidic residues). Residues 139-150 (GRFYYSEEDHGD) are compositionally biased toward basic and acidic residues. Residues 307-328 (PARGIAIVSVLVILISIVIFCL) form a helical membrane-spanning segment. Topologically, residues 329-372 (ETLPEFRDDRDLIMALSAGGHSRLLNDTSAPHLENSGHTIFNDP) are extracellular. A glycan (N-linked (GlcNAc...) asparagine) is linked at Asn354. A helical transmembrane segment spans residues 373-394 (FFIVETVCIVWFSFEFVVRCFA). The Cytoplasmic portion of the chain corresponds to 395–405 (CPSQALFFKNI). The chain crosses the membrane as a helical span at residues 406–426 (MNIIDIVSILPYFITLGTDLA). The Extracellular segment spans residues 427–441 (QQQGGGNGQQQQAMS). Residues 442–462 (FAILRIIRLVRVFRIFKLSRH) form a helical; Voltage-sensor membrane-spanning segment. The Cytoplasmic portion of the chain corresponds to 463-477 (SKGLQILGHTLRASM). The segment at 464-477 (KGLQILGHTLRASM) is S4-S5 linker. The chain crosses the membrane as a helical span at residues 478 to 499 (RELGLLIFFLFIGVILFSSAVY). The Extracellular portion of the chain corresponds to 500–513 (FAEADEPTTHFQSI). The helical intramembrane region spans 514 to 525 (PDAFWWAVVTMT). The Selectivity filter signature appears at 526–531 (TVGYGD). An intramembrane segment occupies 526–533 (TVGYGDMK). The Extracellular portion of the chain corresponds to 534–540 (PITVGGK). The helical transmembrane segment at 541–569 (IVGSLCAIAGVLTIALPVPVIVSNFNYFY) threads the bilayer. The Cytoplasmic segment spans residues 570 to 655 (HRETENEEQT…SNAKAVETDV (86 aa)). Ser601 carries the post-translational modification Phosphoserine; by PKA. Residues 631–642 (CQGKGDDSETDK) show a composition bias toward basic and acidic residues. Residues 631 to 655 (CQGKGDDSETDKNNCSNAKAVETDV) are disordered. The PDZ-binding motif lies at 653-655 (TDV).

The protein belongs to the potassium channel family. A (Shaker) (TC 1.A.1.2) subfamily. Kv1.4/KCNA4 sub-subfamily. As to quaternary structure, homotetramer and heterotetramer of potassium channel proteins. Interacts with KCNAB1 and KCNAB2. Interacts with DLG1, DLG2 and DLG4 via their PDZ domains. Interacts with SIGMAR1. Part of a complex containing KCNA1, KCNAB1 and LGI1. Detected in a complex with KCNA1. Interacts with KCNA2. Interacts (via cytoplasmic N-terminal domain) with KCNRG. In terms of processing, N-glycosylated. As to expression, detected in brain (at protein level). Heart and brain.

It localises to the cell membrane. It is found in the cell projection. The protein localises to the axon. The enzyme catalyses K(+)(in) = K(+)(out). Functionally, voltage-gated potassium channel that mediates transmembrane potassium transport in excitable membranes. Forms tetrameric potassium-selective channels through which potassium ions pass in accordance with their electrochemical gradient. The channel alternates between opened and closed conformations in response to the voltage difference across the membrane. Can form functional homotetrameric channels and heterotetrameric channels that contain variable proportions of KCNA1, KCNA2, KCNA4, KCNA5, and possibly other family members as well; channel properties depend on the type of alpha subunits that are part of the channel. Channel properties are modulated by cytoplasmic beta subunits that regulate the subcellular location of the alpha subunits and promote rapid inactivation. In vivo, membranes probably contain a mixture of heteromeric potassium channel complexes, making it difficult to assign currents observed in intact tissues to any particular potassium channel family member. Homotetrameric KCNA4 forms a potassium channel that opens in response to membrane depolarization, followed by rapid spontaneous channel closure. Likewise, a heterotetrameric channel formed by KCNA1 and KCNA4 shows rapid inactivation. In Rattus norvegicus (Rat), this protein is Potassium voltage-gated channel subfamily A member 4 (Kcna4).